A 183-amino-acid chain; its full sequence is Oligoribonuclease (183 aa).

The 164-residue stretch at 8-171 (LIWIDLEMTG…DDIRDSIHEL (164 aa)) folds into the Exonuclease domain. Residue Y129 is part of the active site.

Belongs to the oligoribonuclease family.

Its subcellular location is the cytoplasm. 3'-to-5' exoribonuclease specific for small oligoribonucleotides. The sequence is that of Oligoribonuclease from Halorhodospira halophila (strain DSM 244 / SL1) (Ectothiorhodospira halophila (strain DSM 244 / SL1)).